The following is a 114-amino-acid chain: Iron-sulfur cluster insertion protein ErpA (114 aa).

Cysteine 42, cysteine 106, and cysteine 108 together coordinate iron-sulfur cluster.

This sequence belongs to the HesB/IscA family. As to quaternary structure, homodimer. Requires iron-sulfur cluster as cofactor.

Functionally, required for insertion of 4Fe-4S clusters for at least IspG. The polypeptide is Iron-sulfur cluster insertion protein ErpA (Shigella boydii serotype 18 (strain CDC 3083-94 / BS512)).